The following is a 215-amino-acid chain: Large ribosomal subunit protein eL15 (215 aa).

Residues 179 to 215 (GTVKHKWKKKEKEREQKKRHEATKYYRLQNYDKLPGK) are disordered. The segment covering 188-202 (KEKEREQKKRHEATK) has biased composition (basic and acidic residues).

This sequence belongs to the eukaryotic ribosomal protein eL15 family.

The chain is Large ribosomal subunit protein eL15 from Sulfurisphaera tokodaii (strain DSM 16993 / JCM 10545 / NBRC 100140 / 7) (Sulfolobus tokodaii).